A 309-amino-acid chain; its full sequence is Protein lifeguard 3 (309 aa).

Disordered stretches follow at residues Met1–Val31 and Pro64–Pro84. Positions Asp70–Pro84 are enriched in basic and acidic residues. A phosphoserine mark is found at Ser79 and Ser81. Helical transmembrane passes span Tyr101–Val121, Val132–Cys152, Ile163–Met183, Ala188–Phe208, Phe221–Phe241, Ile244–Ala264, and Gly286–Gly306.

It belongs to the BI1 family. LFG subfamily. In terms of tissue distribution, expressed in most tissues except spleen, thymus and testis.

The protein resides in the membrane. Its subcellular location is the lysosome membrane. It is found in the endosome membrane. In terms of biological role, negatively regulates aortic matrix metalloproteinase-9 (MMP9) production and may play a protective role in vascular remodeling. This chain is Protein lifeguard 3 (Tmbim1), found in Mus musculus (Mouse).